Reading from the N-terminus, the 1796-residue chain is MDPTFPRVVFFSNEFPSDDLKDLFRRLHQQSKDRRFKLLSIFLEESTAILKDEVAKLPRPLKELVPPFDSVLALANVDFRQGPLGAAMESSMLTILELGMFIGHYEAEDAEWDLVPSRTVLAGLSIGILAAAAVALSSSLADVAKNGAEGVRVSFRLGVYVADISTKLESPQPDGTLSSWAHVVTETTQAGVQDELDQFNADTQSPELTKVFVSAADKTSVSVSGPPSRIKAAFQHSPALRYSKSLPLPVYDGLCHASHLYTQNDIDAVINSAESVIQPNRSVRLALLSSQTGKPFAARTARELFLEIGTELLTGTIYLDNVTAGIVEHFQLDSETSGKCQIDSFRTSLVLRGIYSTVEAKFTKEQQQLIRRDLVCWVHKDFGPRRPHSHASSKLAIVGMACRLPGGANDLDLFWKLLEEGRDTHTTVPPDRFDLNTHYDPTGKTENATQTPFGNFIDRPGYFDAGFFNMSPREAEQTDPMQRLALVTAYEAMEMAGVVPGRTPSTHPSRIGTFYGQASDDWRELNASQNISTYAVPGGERAFANGRINYFFKFSGPSFNLDTACSSGLAAVQAACSALWAGEADTVIAGGLNVITDPDNYCGLGNAHFLSKTGQCKVWDKDADGYCRADGIGSVVIKRLEDAEADNDNILAVVLGARTNHSAEAISITHPHAGAQRANYRQVLHQAGVNPVDVSYIELHGTGTQAGDAVESESVSDVFAPVTPRRRPDQRLYLGAVKSNIGHGEAAAGIASLLKALLVYQKNMIPMHIGIKSEINPTIPKDLERRNVGLAMENTPWPRPAGKKRLAVVNSFGAHGGNTTLLLEDAPERVKAQSTEDRITHPVLISAKSKKSLQANMESLLSYLDQHPETSLADLAYTTSSRRMHHSMRFGTAVSCIPALQKALRSQLCNPNFASEMRPIPNEAPSVVLAFTGQGAYYSGMGRELFIEFPYFRAQVQQLDRLAQRLGFPSVVPVIDGSIEDSPASPILTQLSVVILEIALARFWSLLGVSISAVIGHSLGEYAALAVAGVISAADALYLVGRRAQLVEERCTPGSHSMLSVRASEDAIQEMLASEPETAAIAYEVSCCNTYQDTVIGGLKDEINNIRMALEAKSIKCTLLDVPYAFHTAQMDSILDGLEALAMPVPFKAPSIPVLSPLLATAVFDVKSFNANYLRRATRETVDFAAAIEAAQDMGLVDTKTIWVDVGPHPICAGLVRGMIPSASVVSSCRRNEDSIATISKSLVTLHLAGLTPFWAEFFRPRECEYSLLHLPKYRWNETDYWIPYIGTWTLDKAHLKHGTKPTPFSLSMSRPSALRTSLVHQITAETVEATTATLHTISDMQHPDFLEAIHGHTMNKCGVATSSIWSDMAFTVGEYLYRRLVPNVKDVHMNLADVEVLHAQVAGKTKGSVQPLVLQAHLDLSTNSMSLAWFNADGETGECAAESFATATVRFEDPVAWKKEWARLTHLVRGRIEALEQRAAEGKASRLSKPLAYALFKNVVDYADRYRGMDSVVLDELEAMAEVTLVPERHGTWHTPPHWIDSVSHLAGLVMNGSDASNTRDYFFVTPGCDSFRLLNKLEPGVRYRSYVRMFPLPEDPNMHGGDVYILQGEEIVGMVGMIRFRRVPRLLMDRFFSPPTTTSVAGPAPPVAAATAKGHNVIPTTPAVPTPAPAIATSNPIVNSAIAYKTPESTPPLAPSSESSTPKESPIATPPESERADPMDNMVSQCLRLMARETGLEVEALTGDASFVQLGVDSLMSLVLSEKFRAELGVEIKSSLFLECPTIGEMTAWIEEYC.

The segment at Asp18 to His256 is N-terminal acylcarrier protein transacylase domain (SAT). The 434-residue stretch at Ser392–Asp825 folds into the Ketosynthase family 3 (KS3) domain. Active-site for beta-ketoacyl synthase activity residues include Cys565, His700, and His743. A malonyl-CoA:ACP transacylase (MAT) domain region spans residues Phe931–Leu1251. The tract at residues Thr1317–Pro1636 is product template (PT) domain. An N-terminal hotdog fold region spans residues His1321–Ala1457. The region spanning His1321–Asp1631 is the PKS/mFAS DH domain. His1353 functions as the Proton acceptor; for dehydratase activity in the catalytic mechanism. The segment at Ala1485–Asp1631 is C-terminal hotdog fold. Residue Asp1542 is the Proton donor; for dehydratase activity of the active site. The interval Thr1688 to Pro1720 is disordered. The span at Pro1697–Pro1708 shows a compositional bias: low complexity. The Carrier domain occupies Asp1719 to Cys1796. Ser1756 is subject to O-(pantetheine 4'-phosphoryl)serine.

Pantetheine 4'-phosphate is required as a cofactor.

It functions in the pathway secondary metabolite biosynthesis. Functionally, non-reducing polyketide synthase; part of the gene cluster that mediates the biosynthesis of neosartoricin B, a prenylated anthracenone that probably exhibits T-cell antiproliferative activity, suggestive of a physiological role as an immunosuppressive agent. The non-reducing polyketide synthase nscA probably synthesizes and cyclizes the decaketide backbone. The hydrolase nscB then mediates the product release through hydrolysis followed by spontaneous decarboxylation. The prenyltransferase nscD catalyzes the addition of the dimethylallyl group to the aromatic C5. The FAD-dependent monooxygenase nscC is then responsible for the stereospecific hydroxylation at C2. Neosartoricin B can be converted into two additional compounds neosartoricins C and D. Neosartoricin C is a spirocyclic compound that is cyclized through the attack of C3 hydroxyl on C14, followed by dehydration. On the other hand, neosartoricin D is a further cyclized compound in which attack of C2 on C14 in neosartoricin C results in the formation of the acetal-containing dioxabicyclo-octanone ring. Both of these compounds are novel and possibly represent related metabolites of the gene cluster. The polypeptide is Non-reducing polyketide synthase nscA (Arthroderma otae (strain ATCC MYA-4605 / CBS 113480) (Microsporum canis)).